The chain runs to 520 residues: Ribonuclease Y (520 aa).

A helical transmembrane segment spans residues 4-24; that stretch reads VSGILLVLIGLLAGVGLGVLL. A KH domain is found at 210 to 270; it reads TVSVVNLPNE…VRREVARVSL (61 aa). The HD domain maps to 336–429; that stretch reads VLQHSREVAF…VQAADALSGA (94 aa).

Belongs to the RNase Y family.

It is found in the cell membrane. Its function is as follows. Endoribonuclease that initiates mRNA decay. The chain is Ribonuclease Y from Syntrophobacter fumaroxidans (strain DSM 10017 / MPOB).